The primary structure comprises 264 residues: Probable BRI1 kinase inhibitor 1 (264 aa).

Disordered regions lie at residues 1–146 (MTMN…GLDV) and 165–240 (FSRH…SEES). Over residues 9–30 (RSQPPPPHPPLFKPTTPPPPPL) the composition is skewed to pro residues. Over residues 31–40 (LSTSTSTSPP) the composition is skewed to low complexity. The segment covering 77 to 97 (LSHNNYSSKANQHRQTGSSSS) has biased composition (polar residues). The segment covering 98 to 107 (SKEKDREYKA) has biased composition (basic and acidic residues). Low complexity-rich tracts occupy residues 208–219 (LSSAPASLRASP) and 227–239 (VGGS…SSEE).

In terms of assembly, interacts with BRI1. In terms of processing, phosphorylated by BRI1.

In terms of biological role, negative regulator of brassinosteroid signaling. This chain is Probable BRI1 kinase inhibitor 1 (BKI1), found in Oryza sativa subsp. japonica (Rice).